Here is a 523-residue protein sequence, read N- to C-terminus: Bifunctional purine biosynthesis protein PurH (523 aa).

Residues 4–152 form the MGS-like domain; it reads DHIRRPIRRA…KNHPSVAVVT (149 aa).

It belongs to the PurH family.

The enzyme catalyses (6R)-10-formyltetrahydrofolate + 5-amino-1-(5-phospho-beta-D-ribosyl)imidazole-4-carboxamide = 5-formamido-1-(5-phospho-D-ribosyl)imidazole-4-carboxamide + (6S)-5,6,7,8-tetrahydrofolate. It carries out the reaction IMP + H2O = 5-formamido-1-(5-phospho-D-ribosyl)imidazole-4-carboxamide. Its pathway is purine metabolism; IMP biosynthesis via de novo pathway; 5-formamido-1-(5-phospho-D-ribosyl)imidazole-4-carboxamide from 5-amino-1-(5-phospho-D-ribosyl)imidazole-4-carboxamide (10-formyl THF route): step 1/1. It functions in the pathway purine metabolism; IMP biosynthesis via de novo pathway; IMP from 5-formamido-1-(5-phospho-D-ribosyl)imidazole-4-carboxamide: step 1/1. This is Bifunctional purine biosynthesis protein PurH from Mycobacterium ulcerans (strain Agy99).